The sequence spans 329 residues: Probable carboxylesterase 13 (329 aa).

At methionine 1 the chain carries N-acetylmethionine. Positions 81 to 83 (HGG) match the Involved in the stabilization of the negatively charged intermediate by the formation of the oxyanion hole motif. Residues serine 165, aspartate 269, and histidine 302 contribute to the active site.

Belongs to the 'GDXG' lipolytic enzyme family. Expressed in flowers.

It carries out the reaction a carboxylic ester + H2O = an alcohol + a carboxylate + H(+). Carboxylesterase acting on esters with varying acyl chain length. This is Probable carboxylesterase 13 (CXE13) from Arabidopsis thaliana (Mouse-ear cress).